The chain runs to 852 residues: MPHIQESRVWCRSISQLSHLAEQFVTENGTESTDMKLLLQQCVDTLSNYQDECKKIKSVSKPVPSKELYDLYETAYVYFKIVSLIVLNKIPKLEEYARAKSDAVDRTGKQLLEIYNMLVNRLVKDDRIAEIKRFVKENSRRDPEAKNEQIGVESGKSIPATLLRNLLMGPSASGTVLLVDVRPRLDFMRCHIKSSSIICIEPVSFKESYTDIDLGKKSMITSPDAEIALFQDRDKFDYIVVYTQDSEKNKHNVQQQQLLVDLLINRSFEKALDRTKVFILAGGFSEWSNAHPDFCVSSQGDSVYLNGDTSGLSLQLMPQTTPQKQYNNMFQTMLSGPTDVHGIIRNPHNFPTQQKSKLKRVPSFRDYFRSSSSSSNINERPGSVPPQLSNGSTIYPETPKLMTNDEYMKSLPQLSPITARAITSPSRALSAVGVSKSSASNSISSLLANSGSASPMKPPDTPLPFTDSIKTLGQQNLTVAVSNLNFSVGLVNCGNSCYMSCIIQCLLGTQELCTMFLNNSYQNHINLNSRLGSKGLLARYFSQLIHQMYQYGKDIRKKMGNEKTAVIPTQFKIACGSINSSFKDNTQQDCQEFCQFLLDGLHEDLNQCGNNPPLKELSEEAEKMREMMPMRLASAIEWERYLTTDFSVIVDLFQGQYASQLQCKVCQRTSTTYQPFSVLSVPVPSTRTCTLTDCFTEFTKIETLEQEEQWSCPSCKKRQPSTKKITITRLPRNLIIHLKRFDNMLNKNNVFVSYPSVLDLTAFWANDYDKKVTNNNVELPSRGQVPPFNYQLYGIACHDGTLRAGHYTAYVNKGAVLGWCYYDDTNWRQIRSAREYITQNAYVLFYHRIHST.

The Rhodanese domain maps to 172–296 (ASGTVLLVDV…WSNAHPDFCV (125 aa)). The interval 369-393 (RSSSSSSNINERPGSVPPQLSNGST) is disordered. The region spanning 488–849 (VGLVNCGNSC…NAYVLFYHRI (362 aa)) is the USP domain. Cysteine 497 (nucleophile) is an active-site residue. Catalysis depends on histidine 806, which acts as the Proton acceptor.

Belongs to the peptidase C19 family.

The protein localises to the cytoplasm. Its subcellular location is the late endosome membrane. It catalyses the reaction Thiol-dependent hydrolysis of ester, thioester, amide, peptide and isopeptide bonds formed by the C-terminal Gly of ubiquitin (a 76-residue protein attached to proteins as an intracellular targeting signal).. With respect to regulation, RFU1 is an inhibitor of deubiquitination activity. In terms of biological role, ubiquitin thioesterase that acts at the late endosome/prevacuolar compartment to recover ubiquitin from ubiquitinated membrane proteins en route to the vacuole. Also removes ubiquitin from soluble proteins targeted to proteasomes. Is essential to maintain a normal level of free ubiquitin. Required for promoting coordination of DNA replication and avoids DNA overreplication. The polypeptide is Ubiquitin carboxyl-terminal hydrolase 4 (DOA4) (Eremothecium gossypii (strain ATCC 10895 / CBS 109.51 / FGSC 9923 / NRRL Y-1056) (Yeast)).